We begin with the raw amino-acid sequence, 472 residues long: Serine/threonine-protein phosphatase T (472 aa).

TPR repeat units lie at residues 7-40, 41-73, and 74-107; these read ADKLKQLGNAAFSERKWHLAIDMYTKAIELTKTP, TLFCNRALAELRAELPGAALADADAALGIEPTF, and AKAYYHKASAYLSLGKHKQALTNYKKVVDLAPQN. Residues D217, H219, D246, and N278 each contribute to the Mn(2+) site. H279 serves as the catalytic Proton donor/acceptor. Positions 327 and 403 each coordinate Mn(2+).

Belongs to the PPP phosphatase family. PP-5 (PP-T) subfamily. It depends on Mg(2+) as a cofactor. Mn(2+) serves as cofactor.

It is found in the cytoplasm. The protein localises to the cytosol. The protein resides in the nucleus. The catalysed reaction is O-phospho-L-seryl-[protein] + H2O = L-seryl-[protein] + phosphate. The enzyme catalyses O-phospho-L-threonyl-[protein] + H2O = L-threonyl-[protein] + phosphate. Activated by arachidonic acid. Its function is as follows. May function as a protein phosphatase. In Trypanosoma brucei brucei (strain 927/4 GUTat10.1), this protein is Serine/threonine-protein phosphatase T.